Reading from the N-terminus, the 550-residue chain is MPQLNSGGGDELGANDELIRFKDEGEQEEKSPGEGSAEDLADVKSSLVNESENHSSDSDSEVERRPPPRETFEKPRDYLSEAFRRQQDAAFFKGPPYAGYPFLMIPDLGGITCPMVPSHPASRAYLQMKWPLLDSPSTAGLKDARSPSPAHLSNKVPVVQHPHHMHPLTPLITYSNEHFSPGTPPGHLSPEIDPKTGIPRPPHPSELSPYYPLSPGAVGQIPHRLGWLVPQQGQPMYSIPPGGFRHPYPALAMNASMSSLVSSRFSPHMVPPPHHSLHTSGIPHPAIVSPIVKQEPSSGNISPNLSRKSNVVVKKEEEKKPHIKKPLNAFMLYMKEMRAKVVAECTLKESAAINQILGRRWHSLSREEQAKYYELARKERQLHSQLYPSWSARDNYGKKKKRKREKQSPEMENYTKTKKMCVQHFPSDKSCDSPASSHGSMLDSPATPSAALASPAAPAATHSEQAQPLSLTTKPEARALSHSAAFLASKSPSSSSLSGHLPSPVGASLLSRPIPLTSSILSPPGVFPSALQALPLLQAQPLSLVTRSSD.

Residues 1–11 are compositionally biased toward gly residues; the sequence is MPQLNSGGGDE. An interaction with CTNNB1-A region spans residues 1 to 60; that stretch reads MPQLNSGGGDELGANDELIRFKDEGEQEEKSPGEGSAEDLADVKSSLVNESENHSSDSDS. 3 disordered regions span residues 1–76, 182–206, and 390–473; these read MPQL…EKPR, GTPPGHLSPEIDPKTGIPRPPHPSE, and WSAR…SLTT. Basic and acidic residues-rich tracts occupy residues 17 to 32 and 51 to 76; these read ELIRFKDEGEQEEKSP and SENHSSDSDSEVERRPPPRETFEKPR. Residues 108-311 form an interaction with AES and TLE4-A region; it reads LGGITCPMVP…SPNLSRKSNV (204 aa). Positions 323–391 form a DNA-binding region, HMG box; it reads IKKPLNAFML…LHSQLYPSWS (69 aa). The segment covering 406–415 has biased composition (basic and acidic residues); sequence KQSPEMENYT. The tract at residues 407-550 is interaction with CTBP-B; sequence QSPEMENYTK…PLSLVTRSSD (144 aa). Positions 444 to 463 are enriched in low complexity; it reads SPATPSAALASPAAPAATHS. Polar residues predominate over residues 464–473; that stretch reads EQAQPLSLTT.

This sequence belongs to the TCF/LEF family. Interacts with csnk1e, ctnnb1-A, ctbp-B, dact1-A and gsk3b. May interact with ase and tle4-A. Post-translationally, phosphorylated. Phosphorylation by csnk1e promotes binding to ctnnb1-A while phosphorylation by gsk3b may reverse this effect.

It is found in the nucleus. In terms of biological role, participates in the Wnt signaling pathway. Binds to DNA and acts as a repressor in the absence of ctnnb1-A and possibly ctnnb1-B, and as an activator in the presence of these proteins. Required early in development for the establishment of the dorsal body axis in response to maternal Wnt signaling. In Xenopus laevis (African clawed frog), this protein is Transcription factor 7-like 1-C (tcf7l1-c).